A 293-amino-acid polypeptide reads, in one-letter code: Indole-3-glycerol phosphate synthase (293 aa).

Belongs to the TrpC family.

It carries out the reaction 1-(2-carboxyphenylamino)-1-deoxy-D-ribulose 5-phosphate + H(+) = (1S,2R)-1-C-(indol-3-yl)glycerol 3-phosphate + CO2 + H2O. Its pathway is amino-acid biosynthesis; L-tryptophan biosynthesis; L-tryptophan from chorismate: step 4/5. The sequence is that of Indole-3-glycerol phosphate synthase from Prochlorococcus marinus (strain SARG / CCMP1375 / SS120).